The primary structure comprises 917 residues: Isoleucine--tRNA ligase (917 aa).

Positions 59–69 (PYANGHIHIGH) match the 'HIGH' region motif. E569 lines the L-isoleucyl-5'-AMP pocket. A 'KMSKS' region motif is present at residues 610–614 (KMSKS). K613 contacts ATP. Zn(2+) is bound by residues C890, C893, C905, and C908.

This sequence belongs to the class-I aminoacyl-tRNA synthetase family. IleS type 1 subfamily. In terms of assembly, monomer. Requires Zn(2+) as cofactor.

Its subcellular location is the cytoplasm. The enzyme catalyses tRNA(Ile) + L-isoleucine + ATP = L-isoleucyl-tRNA(Ile) + AMP + diphosphate. Its function is as follows. Catalyzes the attachment of isoleucine to tRNA(Ile). As IleRS can inadvertently accommodate and process structurally similar amino acids such as valine, to avoid such errors it has two additional distinct tRNA(Ile)-dependent editing activities. One activity is designated as 'pretransfer' editing and involves the hydrolysis of activated Val-AMP. The other activity is designated 'posttransfer' editing and involves deacylation of mischarged Val-tRNA(Ile). This chain is Isoleucine--tRNA ligase, found in Campylobacter jejuni subsp. jejuni serotype O:2 (strain ATCC 700819 / NCTC 11168).